Reading from the N-terminus, the 472-residue chain is Ribosomal protein uS12 methylthiotransferase RimO (472 aa).

Residues 1–114 enclose the MTTase N-terminal domain; sequence MKFHIITLGC…IGDVVDTLQR (114 aa). [4Fe-4S] cluster contacts are provided by Cys-10, Cys-46, Cys-78, Cys-171, Cys-175, and Cys-178. The 232-residue stretch at 157-388 folds into the Radical SAM core domain; the sequence is RITGPSAYLK…MRLQQGISRQ (232 aa). The TRAM domain maps to 391–460; sequence RRWVGRVIRV…DYDLWGEMVE (70 aa).

It belongs to the methylthiotransferase family. RimO subfamily. [4Fe-4S] cluster is required as a cofactor.

The protein localises to the cytoplasm. It carries out the reaction L-aspartate(89)-[ribosomal protein uS12]-hydrogen + (sulfur carrier)-SH + AH2 + 2 S-adenosyl-L-methionine = 3-methylsulfanyl-L-aspartate(89)-[ribosomal protein uS12]-hydrogen + (sulfur carrier)-H + 5'-deoxyadenosine + L-methionine + A + S-adenosyl-L-homocysteine + 2 H(+). In terms of biological role, catalyzes the methylthiolation of an aspartic acid residue of ribosomal protein uS12. This is Ribosomal protein uS12 methylthiotransferase RimO from Roseiflexus sp. (strain RS-1).